Reading from the N-terminus, the 127-residue chain is Holo-[acyl-carrier-protein] synthase (127 aa).

Asp8 and Glu57 together coordinate Mg(2+).

It belongs to the P-Pant transferase superfamily. AcpS family. Requires Mg(2+) as cofactor.

The protein resides in the cytoplasm. The enzyme catalyses apo-[ACP] + CoA = holo-[ACP] + adenosine 3',5'-bisphosphate + H(+). Transfers the 4'-phosphopantetheine moiety from coenzyme A to a Ser of acyl-carrier-protein. The sequence is that of Holo-[acyl-carrier-protein] synthase from Ruthia magnifica subsp. Calyptogena magnifica.